Here is a 438-residue protein sequence, read N- to C-terminus: GTPase Der (438 aa).

EngA-type G domains are found at residues 2–164 and 173–343; these read HKVA…PEDD and IRIS…EKWQ. GTP-binding positions include 8 to 15, 55 to 59, 116 to 119, 179 to 186, 226 to 230, and 288 to 291; these read GRPNVGKS, DTGGL, NKID, DTAGI, and NKWD. The KH-like domain occupies 344-428; the sequence is SRIGTSELNR…PVRLKWKEKG (85 aa).

This sequence belongs to the TRAFAC class TrmE-Era-EngA-EngB-Septin-like GTPase superfamily. EngA (Der) GTPase family. Associates with the 50S ribosomal subunit.

GTPase that plays an essential role in the late steps of ribosome biogenesis. In Deinococcus radiodurans (strain ATCC 13939 / DSM 20539 / JCM 16871 / CCUG 27074 / LMG 4051 / NBRC 15346 / NCIMB 9279 / VKM B-1422 / R1), this protein is GTPase Der.